The sequence spans 421 residues: Divalent metal cation transporter MntH (421 aa).

The next 11 helical transmembrane spans lie at 27–47 (LGPA…ATNI), 51–71 (SLFD…AIFL), 100–120 (WFLW…EFLG), 128–148 (LFHI…FAIV), 160–180 (GIIF…LFIA), 201–221 (AMLI…IYLH), 248–268 (ILVA…VSAA), 289–309 (PLLG…SGFS), 337–357 (LVTM…LKSL), 358–378 (IVSQ…LLLI), and 396–416 (IMGV…LYLT).

It belongs to the NRAMP family.

It is found in the cell membrane. Its function is as follows. H(+)-stimulated, divalent metal cation uptake system. The chain is Divalent metal cation transporter MntH from Caldanaerobacter subterraneus subsp. tengcongensis (strain DSM 15242 / JCM 11007 / NBRC 100824 / MB4) (Thermoanaerobacter tengcongensis).